We begin with the raw amino-acid sequence, 726 residues long: uncharacterized protein (726 aa).

The region spanning 10–135 (MRISWVVAFI…LLDFVETHLN (126 aa)) is the Thioredoxin domain. Disordered regions lie at residues 133 to 153 (HLNP…TDED) and 227 to 280 (VTSV…NPTG). Acidic residues predominate over residues 138–153 (TDPDIPSDEDVLTDED). Residues 675–695 (IRVLYMVLGIVTVGILVWYFS) traverse the membrane as a helical segment. S708 is subject to Phosphoserine.

It localises to the membrane. This is an uncharacterized protein from Schizosaccharomyces pombe (strain 972 / ATCC 24843) (Fission yeast).